Here is a 183-residue protein sequence, read N- to C-terminus: Proton-transporting V-type ATPase complex assembly regulator TMEM9 (183 aa).

Positions 1–20 are cleaved as a signal peptide; that stretch reads MKLLSLVAVVGCLLVPPAEA. N-linked (GlcNAc...) asparagine glycans are attached at residues Asn21, Asn38, and Asn47. At 21–89 the chain is on the extracellular side; that stretch reads NKSSEDIRCK…YEERSTTTIK (69 aa). Residues 90 to 110 traverse the membrane as a helical segment; it reads VIIVIYLSVVGALLLYMAFLM. Over 111-183 the chain is Cytoplasmic; it reads LVDPLIRKPD…TVFDRHKMLS (73 aa). 2 positions are modified to phosphoserine: Ser137 and Ser144.

Belongs to the TMEM9 family. In terms of assembly, interacts with the v-ATPase accessory protein ATP6AP2 and with the v-ATPase complex subunit ATP6V0D1; these interactions lead to the assembly of the v-ATPase complex. Post-translationally, N-glycosylated. As to expression, highly expressed in adrenal gland, thyroid gland, testis, ovary and prostate. Moderate expression in trachea, spinal cord, stomach, colon, small intestine and spleen. Low expression in bone marrow, lymph node, thymus and peripheral blood lymphocytes. Expression is detected in hematopoietic cell lines including those of myeloid, erythroid, B- and T-cell origin.

Its subcellular location is the lysosome membrane. It is found in the late endosome membrane. It localises to the endosome. The protein localises to the multivesicular body membrane. In terms of biological role, transmembrane protein that binds to and facilitates the assembly of lysosomal proton-transporting V-type ATPase (v-ATPase), resulting in enhanced lysosomal acidification and trafficking. By bringing the v-ATPase accessory protein ATP6AP2 and the v-ATPase subunit ATP6V0D1 together, allows v-ATPase complex formation and activation. TMEM9-controlled vesicular acidification induces hyperactivation of Wnt/beta-catenin signaling, involved in development, tissue homeostasis and tissue regeneration, through lysosomal degradation of adenomatous polyposis coli/APC. In the liver, involved in hepatic regeneration. In Homo sapiens (Human), this protein is Proton-transporting V-type ATPase complex assembly regulator TMEM9.